The primary structure comprises 391 residues: Anhydro-N-acetylmuramic acid kinase (391 aa).

ATP is bound at residue 9–16; the sequence is GTSVDGID.

This sequence belongs to the anhydro-N-acetylmuramic acid kinase family.

The catalysed reaction is 1,6-anhydro-N-acetyl-beta-muramate + ATP + H2O = N-acetyl-D-muramate 6-phosphate + ADP + H(+). Its pathway is amino-sugar metabolism; 1,6-anhydro-N-acetylmuramate degradation. It participates in cell wall biogenesis; peptidoglycan recycling. Functionally, catalyzes the specific phosphorylation of 1,6-anhydro-N-acetylmuramic acid (anhMurNAc) with the simultaneous cleavage of the 1,6-anhydro ring, generating MurNAc-6-P. Is required for the utilization of anhMurNAc either imported from the medium or derived from its own cell wall murein, and thus plays a role in cell wall recycling. The chain is Anhydro-N-acetylmuramic acid kinase from Gloeothece citriformis (strain PCC 7424) (Cyanothece sp. (strain PCC 7424)).